The primary structure comprises 365 residues: Chorismate synthase (365 aa).

Arg-47 serves as a coordination point for NADP(+). FMN contacts are provided by residues Arg-124–Ser-126, Gly-287, Lys-302–Thr-306, and Arg-328.

The protein belongs to the chorismate synthase family. Homotetramer. Requires FMNH2 as cofactor.

The enzyme catalyses 5-O-(1-carboxyvinyl)-3-phosphoshikimate = chorismate + phosphate. Its pathway is metabolic intermediate biosynthesis; chorismate biosynthesis; chorismate from D-erythrose 4-phosphate and phosphoenolpyruvate: step 7/7. Catalyzes the anti-1,4-elimination of the C-3 phosphate and the C-6 proR hydrogen from 5-enolpyruvylshikimate-3-phosphate (EPSP) to yield chorismate, which is the branch point compound that serves as the starting substrate for the three terminal pathways of aromatic amino acid biosynthesis. This reaction introduces a second double bond into the aromatic ring system. In Prochlorococcus marinus (strain MIT 9312), this protein is Chorismate synthase.